Here is a 316-residue protein sequence, read N- to C-terminus: D-alanine--D-alanine ligase (316 aa).

An ATP-grasp domain is found at 107-303 (KEVFAARGLT…FEDLVERILI (197 aa)). 133–188 (AEGFGYPVVVKPSQEGSSVGVSIVKSPEELPSALELAFRYDDDILVERFIKGREIQ) lines the ATP pocket. Mg(2+) is bound by residues aspartate 256, glutamate 269, and asparagine 271.

The protein belongs to the D-alanine--D-alanine ligase family. Requires Mg(2+) as cofactor. Mn(2+) is required as a cofactor.

It localises to the cytoplasm. It catalyses the reaction 2 D-alanine + ATP = D-alanyl-D-alanine + ADP + phosphate + H(+). It participates in cell wall biogenesis; peptidoglycan biosynthesis. Cell wall formation. The chain is D-alanine--D-alanine ligase from Geobacter sulfurreducens (strain ATCC 51573 / DSM 12127 / PCA).